The sequence spans 534 residues: CTP synthase (534 aa).

An amidoligase domain region spans residues 1-267 (MTKYIFVTGG…DQIVCDHLKL (267 aa)). Serine 13 contributes to the CTP binding site. Serine 13 contacts UTP. 14 to 19 (SIGKGI) contacts ATP. Tyrosine 54 serves as a coordination point for L-glutamine. Position 71 (aspartate 71) interacts with ATP. Mg(2+) is bound by residues aspartate 71 and glutamate 141. CTP-binding positions include 148–150 (DIE), 188–193 (KTKPTQ), and lysine 224. Residues 188 to 193 (KTKPTQ) and lysine 224 contribute to the UTP site. In terms of domain architecture, Glutamine amidotransferase type-1 spans 292–534 (KIALVGKYVE…FVTAAVENAK (243 aa)). Position 354 (glycine 354) interacts with L-glutamine. Cysteine 381 serves as the catalytic Nucleophile; for glutamine hydrolysis. L-glutamine is bound by residues 382-385 (LGMQ), glutamate 405, and arginine 463. Residues histidine 508 and glutamate 510 contribute to the active site.

The protein belongs to the CTP synthase family. As to quaternary structure, homotetramer.

It catalyses the reaction UTP + L-glutamine + ATP + H2O = CTP + L-glutamate + ADP + phosphate + 2 H(+). The catalysed reaction is L-glutamine + H2O = L-glutamate + NH4(+). It carries out the reaction UTP + NH4(+) + ATP = CTP + ADP + phosphate + 2 H(+). It participates in pyrimidine metabolism; CTP biosynthesis via de novo pathway; CTP from UDP: step 2/2. Its activity is regulated as follows. Allosterically activated by GTP, when glutamine is the substrate; GTP has no effect on the reaction when ammonia is the substrate. The allosteric effector GTP functions by stabilizing the protein conformation that binds the tetrahedral intermediate(s) formed during glutamine hydrolysis. Inhibited by the product CTP, via allosteric rather than competitive inhibition. Functionally, catalyzes the ATP-dependent amination of UTP to CTP with either L-glutamine or ammonia as the source of nitrogen. Regulates intracellular CTP levels through interactions with the four ribonucleotide triphosphates. This is CTP synthase from Streptococcus thermophilus (strain ATCC BAA-250 / LMG 18311).